The primary structure comprises 239 residues: Large ribosomal subunit protein bL25 (239 aa).

The tract at residues 211–239 is disordered; that stretch reads KGKKDKEDEEAEKGTSVASPTTATGGTKK. The span at 226–239 shows a compositional bias: polar residues; that stretch reads SVASPTTATGGTKK.

The protein belongs to the bacterial ribosomal protein bL25 family. CTC subfamily. As to quaternary structure, part of the 50S ribosomal subunit; part of the 5S rRNA/L5/L18/L25 subcomplex. Contacts the 5S rRNA. Binds to the 5S rRNA independently of L5 and L18.

Its function is as follows. This is one of the proteins that binds to the 5S RNA in the ribosome where it forms part of the central protuberance. This chain is Large ribosomal subunit protein bL25, found in Endomicrobium trichonymphae.